Reading from the N-terminus, the 1894-residue chain is Plexin-A2 (1894 aa).

The signal sequence occupies residues Met-1 to Gly-34. The Sema domain occupies Met-35–Val-508. The Extracellular portion of the chain corresponds to Met-35–Pro-1237. Asn-76 and Asn-91 each carry an N-linked (GlcNAc...) asparagine glycan. 10 disulfide bridges follow: Cys-94/Cys-103, Cys-129/Cys-137, Cys-284/Cys-405, Cys-300/Cys-356, Cys-374/Cys-393, Cys-511/Cys-528, Cys-517/Cys-559, Cys-520/Cys-537, Cys-531/Cys-543, and Cys-594/Cys-613. Asn-327 carries an N-linked (GlcNAc...) asparagine glycan. 3 N-linked (GlcNAc...) asparagine glycosylation sites follow: Asn-598, Asn-696, and Asn-756. IPT/TIG domains follow at residues Pro-858–Phe-951, Pro-954–Tyr-1037, Pro-1041–Tyr-1139, and Pro-1143–Val-1228. N-linked (GlcNAc...) asparagine glycosylation occurs at Asn-1205. The helical transmembrane segment at Ala-1238–Ile-1258 threads the bilayer. Topologically, residues Ala-1259 to Ser-1894 are cytoplasmic. Residues Lys-1261 to Ser-1310 are a coiled coil. Ser-1612 is modified (phosphoserine).

This sequence belongs to the plexin family. As to quaternary structure, homodimer. The PLXNA2 homodimer interacts with a SEMA6A homodimer, giving rise to a heterotetramer. Interacts directly with NRP1 and NRP2. Interacts with RND1. Detected in fetal brain.

It is found in the cell membrane. Coreceptor for SEMA3A and SEMA6A. Necessary for signaling by SEMA6A and class 3 semaphorins and subsequent remodeling of the cytoskeleton. Plays a role in axon guidance, invasive growth and cell migration. Class 3 semaphorins bind to a complex composed of a neuropilin and a plexin. The plexin modulates the affinity of the complex for specific semaphorins, and its cytoplasmic domain is required for the activation of down-stream signaling events in the cytoplasm. This is Plexin-A2 (PLXNA2) from Homo sapiens (Human).